The sequence spans 240 residues: Splicing factor U2AF 35 kDa subunit (240 aa).

A2 is modified (N-acetylalanine). The C3H1-type 1 zinc-finger motif lies at 12 to 40; sequence EKDKVNCSFYFKIGACRHGDRCSRLHNKP. K39 bears the N6-methyllysine mark. Phosphoserine is present on residues S61 and S145. One can recognise an RRM domain in the interval 65-147; that stretch reads LRCAVSDVEM…QPIHAELSPV (83 aa). The C3H1-type 2 zinc-finger motif lies at 149-176; sequence DFREACCRQYEMGECTRGGFCNFMHLKP. The residue at position 165 (R165) is an Omega-N-methylarginine. The disordered stretch occupies residues 183 to 240; the sequence is RELYGRRRKKHRSRSRSRERRSRSRDRGRGGGGGGGGGGGGRERDRRRSRDRERSGRF. Over residues 188–208 the composition is skewed to basic residues; sequence RRRKKHRSRSRSRERRSRSRD. Positions 212–222 are enriched in gly residues; it reads GGGGGGGGGGG. A compositionally biased stretch (basic and acidic residues) spans 223–240; the sequence is GRERDRRRSRDRERSGRF.

The protein belongs to the splicing factor SR family. Identified in the spliceosome C complex. Heterodimer with U2AF2. Interacts (via RS domain) with PHF5A (via N-terminus). Interacts with ZRANB2. Interacts with SDE2. Interacts with SF3B1.

The protein resides in the nucleus. It localises to the nucleus speckle. Plays a critical role in both constitutive and enhancer-dependent splicing by mediating protein-protein interactions and protein-RNA interactions required for accurate 3'-splice site selection. Recruits U2 snRNP to the branch point. Directly mediates interactions between U2AF2 and proteins bound to the enhancers and thus may function as a bridge between U2AF2 and the enhancer complex to recruit it to the adjacent intron. The sequence is that of Splicing factor U2AF 35 kDa subunit (U2AF1) from Homo sapiens (Human).